The sequence spans 683 residues: Inositol-trisphosphate 3-kinase C (683 aa).

Positions 1 to 124 are disordered; it reads MRRCPCRGSL…PDRSSLRTHL (124 aa). Low complexity predominate over residues 13 to 22; the sequence is AEAGALPAAA. Gly residues predominate over residues 44–58; that stretch reads PGAGAPAGRPEGGGP. The segment covering 105–124 has biased composition (basic and acidic residues); it reads ETERPKQKTEPDRSSLRTHL. Residues S127 and S162 each carry the phosphoserine modification. The segment at 147 to 308 is disordered; the sequence is TDPHRSDLQF…EDGPLEEPEP (162 aa). The span at 196-206 shows a compositional bias: polar residues; sequence WTHQNSSSLQT. The span at 249-259 shows a compositional bias: basic and acidic residues; sequence SQKKQDTEAAR. The span at 267–289 shows a compositional bias: polar residues; that stretch reads FQIQQDTDGSWTQPSTDGSQTAP. Residues 297-308 show a composition bias toward acidic residues; sequence EPEDGPLEEPEP. The short motif at 324 to 332 is the Nuclear export signal element; sequence LCPVPRLII. Positions 334 to 387 are disordered; it reads PETPEPEAQPVGPPSRVEGGSGGFSSASSFDESEDDVVAGGGGASDPEDRSGSK. T336 is modified (phosphothreonine). A Phosphoserine modification is found at S404. ATP contacts are provided by residues K431, 471–473, and D484; that span reads EDL. Substrate-binding positions include K486, 507-513, and 534-541; these read RKDMYEK and KPRYMQWR. The interval 509 to 517 is calmodulin-binding; it reads DMYEKMVAV. ATP-binding residues include K558 and D638. K641 contributes to the substrate binding site.

This sequence belongs to the inositol phosphokinase (IPK) family. In terms of tissue distribution, highly expressed in pancreas, skeletal muscle, liver, placenta and weakly in kidney and brain.

It localises to the nucleus. Its subcellular location is the cytoplasm. It carries out the reaction 1D-myo-inositol 1,4,5-trisphosphate + ATP = 1D-myo-inositol 1,3,4,5-tetrakisphosphate + ADP + H(+). With respect to regulation, activated by calcium/calmodulin. Inhibited by high concentrations of the substrate Ins(1,2,4)P3, and allosterically activated by the product Ins(1,3,4,5)P4. Its function is as follows. Catalyzes the phosphorylation of 1D-myo-inositol 1,4,5-trisphosphate (InsP3) into 1D-myo-inositol 1,3,4,5-tetrakisphosphate and participates to the regulation of calcium homeostasis. Can phosphorylate inositol 2,4,5-triphosphate to inositol 2,4,5,6-tetraphosphate. In Homo sapiens (Human), this protein is Inositol-trisphosphate 3-kinase C.